A 397-amino-acid polypeptide reads, in one-letter code: Chalcone synthase 2 (397 aa).

Cysteine 168 is a catalytic residue.

It belongs to the thiolase-like superfamily. Chalcone/stilbene synthases family.

The catalysed reaction is (E)-4-coumaroyl-CoA + 3 malonyl-CoA + 3 H(+) = 2',4,4',6'-tetrahydroxychalcone + 3 CO2 + 4 CoA. It functions in the pathway secondary metabolite biosynthesis; flavonoid biosynthesis. Functionally, the primary product of this enzyme is 4,2',4',6'-tetrahydroxychalcone (also termed naringenin-chalcone or chalcone) which can under specific conditions spontaneously isomerize into naringenin. In Daucus carota (Wild carrot), this protein is Chalcone synthase 2 (CHS2).